The sequence spans 517 residues: MFQMKEYQIHLELDRSQQHNFLYPLLFREYIYALAHDHGLNRSTIPLENGGYDNKSSSLSVKRLISRTYQRIHLSIYAKDSNPNQFIGHNNQFYSQMISEGFSVIVEIPFSLRLVAFLEGKEKEMAKSHNFQSIHSIFPFFENNFSHLHYVLDVLIPYPIRPEILVRTFRYWVKDASSLHLLRFFLHEYFNWNSLITPKKSNSIFSTSKPRFFLFLYNSHVYEYESIFFFLRNQSSHLRSTSSGLLFERISFYGKVEDLVQVFVNDFQDNLWLFKHPIMHYVRYQGKSVLASKDMPLLMNKWKYYLVNLWQWHFHVWSQPGRIHINHLYKDYIYFLGYLSRGRLNTLVVRSQMLENAFLIDNAMKQFETTVPIIPLIGSLTTARFCNSLGHPISKPTWADSSDSYIIDRFMRICRNLSHYHSGSSKKKSLYRIKYILRVSCVKSLVRKHKSTVRVFLKRLGSEFLEEFFTEEEHVLSLIFPRAVFPSRRLYRGRVWYFDIICINDLVNHDKFEIFPN.

The protein belongs to the intron maturase 2 family. MatK subfamily.

It is found in the plastid. Its subcellular location is the chloroplast. In terms of biological role, usually encoded in the trnK tRNA gene intron. Probably assists in splicing its own and other chloroplast group II introns. This Acer pseudoplatanus (Sycamore maple) protein is Maturase K.